The primary structure comprises 71 residues: Ubiquinol-cytochrome c reductase complex assembly factor 6 (71 aa).

Residues 1–8 (MPAGVPMS) are Mitochondrial matrix-facing. A helical; Signal-anchor for type II membrane protein transmembrane segment spans residues 9 to 25 (TYLKMLAASLLAMCAGA). The Mitochondrial intermembrane segment spans residues 26-71 (EVVHRYYRPDLTIPEIPPKRGELKTELLGLKERKHKPQISQQEELK). The segment at 52 to 71 (LLGLKERKHKPQISQQEELK) is disordered.

It belongs to the UQCC6 family. Interacts with UQCRC1. Interacts with UQCRQ. Interacts with UQCC5. Forms a complex, named COMB/coordinator of mitochondrial CYTB biogenesis, composed of UQCC1, UQCC2, UQCC4, UQCC5 and UQCC6; stabilizes nascent cytochrome b/MT-CYB and promotes its membrane insertion. Forms a complex, named COMA, composed of UQCC1, UQCC2 and UQCC4; activates MT-CYB translation. Forms a complex, named COMC, composed of UQCC1, UQCC2; UQCC3 and UQCC4; mediates MT-CYB hemylation and association with the first nuclear-encoded complex III subunit UQCRQ. Interacts with MT-CYB.

It localises to the mitochondrion inner membrane. In terms of biological role, required for the assembly and stability of the mitochondrial ubiquinol-cytochrome c reductase complex (complex III (CIII) or cytochrome b-c1 complex), a multisubunit transmembrane complex that is part of the mitochondrial electron transport chain (ETC) which drives oxidative phosphorylation. Mediates early complex III biogenesis. Participates in regulating the levels of electron transport chain proteins, and therefore energy supply, in response to changes in energy demand. Also required for cytochrome c oxidase complex (complex IV) assembly. The chain is Ubiquinol-cytochrome c reductase complex assembly factor 6 from Pongo abelii (Sumatran orangutan).